A 355-amino-acid chain; its full sequence is 3-isopropylmalate dehydrogenase (355 aa).

Substrate contacts are provided by arginine 90, arginine 100, arginine 128, and aspartate 222. Residues aspartate 222, aspartate 246, and aspartate 250 each coordinate Mg(2+). 280 to 292 is an NAD(+) binding site; it reads GSAPDIAGKGVAN.

It belongs to the isocitrate and isopropylmalate dehydrogenases family. LeuB type 1 subfamily. As to quaternary structure, homodimer. Mg(2+) serves as cofactor. Mn(2+) is required as a cofactor.

The protein localises to the cytoplasm. It catalyses the reaction (2R,3S)-3-isopropylmalate + NAD(+) = 4-methyl-2-oxopentanoate + CO2 + NADH. It participates in amino-acid biosynthesis; L-leucine biosynthesis; L-leucine from 3-methyl-2-oxobutanoate: step 3/4. Its function is as follows. Catalyzes the oxidation of 3-carboxy-2-hydroxy-4-methylpentanoate (3-isopropylmalate) to 3-carboxy-4-methyl-2-oxopentanoate. The product decarboxylates to 4-methyl-2 oxopentanoate. The protein is 3-isopropylmalate dehydrogenase of Cupriavidus metallidurans (strain ATCC 43123 / DSM 2839 / NBRC 102507 / CH34) (Ralstonia metallidurans).